The primary structure comprises 176 residues: dCTP deaminase (176 aa).

DCTP contacts are provided by residues 99–104 (RSTLAR) and Asp115. Glu125 functions as the Proton donor/acceptor in the catalytic mechanism. Gln163 is a binding site for dCTP.

Belongs to the dCTP deaminase family. As to quaternary structure, homotrimer.

It catalyses the reaction dCTP + H2O + H(+) = dUTP + NH4(+). It participates in pyrimidine metabolism; dUMP biosynthesis; dUMP from dCTP (dUTP route): step 1/2. Its function is as follows. Catalyzes the deamination of dCTP to dUTP. In Pyrobaculum neutrophilum (strain DSM 2338 / JCM 9278 / NBRC 100436 / V24Sta) (Thermoproteus neutrophilus), this protein is dCTP deaminase.